The primary structure comprises 313 residues: Porphobilinogen deaminase (313 aa).

Residue cysteine 241 is modified to S-(dipyrrolylmethanemethyl)cysteine.

This sequence belongs to the HMBS family. In terms of assembly, monomer. Dipyrromethane is required as a cofactor.

It catalyses the reaction 4 porphobilinogen + H2O = hydroxymethylbilane + 4 NH4(+). Its pathway is porphyrin-containing compound metabolism; protoporphyrin-IX biosynthesis; coproporphyrinogen-III from 5-aminolevulinate: step 2/4. It participates in porphyrin-containing compound metabolism; chlorophyll biosynthesis. Its function is as follows. Tetrapolymerization of the monopyrrole PBG into the hydroxymethylbilane pre-uroporphyrinogen in several discrete steps. The chain is Porphobilinogen deaminase from Chlorobium chlorochromatii (strain CaD3).